Here is a 417-residue protein sequence, read N- to C-terminus: Serine hydroxymethyltransferase (417 aa).

(6S)-5,6,7,8-tetrahydrofolate is bound by residues Leu-121 and 125–127 (GHL). Lys-230 carries the post-translational modification N6-(pyridoxal phosphate)lysine. Residue Glu-245 coordinates (6S)-5,6,7,8-tetrahydrofolate.

The protein belongs to the SHMT family. As to quaternary structure, homodimer. Requires pyridoxal 5'-phosphate as cofactor.

Its subcellular location is the cytoplasm. The enzyme catalyses (6R)-5,10-methylene-5,6,7,8-tetrahydrofolate + glycine + H2O = (6S)-5,6,7,8-tetrahydrofolate + L-serine. Its pathway is one-carbon metabolism; tetrahydrofolate interconversion. It participates in amino-acid biosynthesis; glycine biosynthesis; glycine from L-serine: step 1/1. In terms of biological role, catalyzes the reversible interconversion of serine and glycine with tetrahydrofolate (THF) serving as the one-carbon carrier. This reaction serves as the major source of one-carbon groups required for the biosynthesis of purines, thymidylate, methionine, and other important biomolecules. Also exhibits THF-independent aldolase activity toward beta-hydroxyamino acids, producing glycine and aldehydes, via a retro-aldol mechanism. This is Serine hydroxymethyltransferase from Desulfitobacterium hafniense (strain DSM 10664 / DCB-2).